The chain runs to 271 residues: Tryptophan synthase alpha chain (271 aa).

Active-site proton acceptor residues include glutamate 49 and aspartate 60.

It belongs to the TrpA family. In terms of assembly, tetramer of two alpha and two beta chains.

The enzyme catalyses (1S,2R)-1-C-(indol-3-yl)glycerol 3-phosphate + L-serine = D-glyceraldehyde 3-phosphate + L-tryptophan + H2O. The protein operates within amino-acid biosynthesis; L-tryptophan biosynthesis; L-tryptophan from chorismate: step 5/5. In terms of biological role, the alpha subunit is responsible for the aldol cleavage of indoleglycerol phosphate to indole and glyceraldehyde 3-phosphate. This Rhizorhabdus wittichii (strain DSM 6014 / CCUG 31198 / JCM 15750 / NBRC 105917 / EY 4224 / RW1) (Sphingomonas wittichii) protein is Tryptophan synthase alpha chain.